Consider the following 640-residue polypeptide: Glycosyltransferase-like protein gnt14 (640 aa).

Over 1–14 the chain is Cytoplasmic; the sequence is MFGFKTTKNKKRVR. Residues 15–35 traverse the membrane as a helical; Signal-anchor for type II membrane protein segment; sequence LLVVAIGVMIFFMCLSNFSSI. Residues 36–640 lie on the Extracellular side of the membrane; the sequence is QSRQSSSTDT…TENCYSNDHW (605 aa). Disordered stretches follow at residues 63 to 184 and 254 to 277; these read PSIN…PLSS and NSNN…NNNY. The span at 65–171 shows a compositional bias: low complexity; sequence ININNSENNI…NININNNNKP (107 aa). The N-linked (GlcNAc...) asparagine glycan is linked to N68. N410 and N539 each carry an N-linked (GlcNAc...) asparagine glycan.

The protein belongs to the glycosyltransferase 8 family. Highly divergent.

Its subcellular location is the membrane. This is Glycosyltransferase-like protein gnt14 (gnt14) from Dictyostelium discoideum (Social amoeba).